The following is a 343-amino-acid chain: Heat-inducible transcription repressor HrcA (343 aa).

Belongs to the HrcA family.

Negative regulator of class I heat shock genes (grpE-dnaK-dnaJ and groELS operons). Prevents heat-shock induction of these operons. This chain is Heat-inducible transcription repressor HrcA, found in Bacillus licheniformis (strain ATCC 14580 / DSM 13 / JCM 2505 / CCUG 7422 / NBRC 12200 / NCIMB 9375 / NCTC 10341 / NRRL NRS-1264 / Gibson 46).